The following is a 167-amino-acid chain: 3-dehydroquinate dehydratase (167 aa).

Residue tyrosine 22 is the Proton acceptor of the active site. Positions 76, 82, and 89 each coordinate substrate. The active-site Proton donor is histidine 102. Substrate-binding positions include leucine 103–threonine 104 and arginine 113.

The protein belongs to the type-II 3-dehydroquinase family. Homododecamer.

The catalysed reaction is 3-dehydroquinate = 3-dehydroshikimate + H2O. It functions in the pathway metabolic intermediate biosynthesis; chorismate biosynthesis; chorismate from D-erythrose 4-phosphate and phosphoenolpyruvate: step 3/7. Its function is as follows. Catalyzes a trans-dehydration via an enolate intermediate. In Helicobacter pylori (strain Shi470), this protein is 3-dehydroquinate dehydratase.